The following is a 513-amino-acid chain: MESLKNNGEKIENFLNQLKNLQSNVDKDFKEFSNSPNTLNAEKDGEFLDKHDEELYNKQIIRSRLEDKISNLSSSMINDIGNDFQTGFQTILYNLPGVGPVFQMIFNIMGNGINLEKFYQEIITQVEQMIKKSLEDYYKNQCNTIFKNLGKACDQHKDLTQKWYDKNGIKSMNHLGKEIPQSTSSTIESDDTLTPMIHASYLDLKIKFNDAITSFTDAKYRGHVAPLLTYTSVMYVAFLRDILKYGKEMKFDDSVLNGSANTPGIKKMLNDFVNVTLSEFLISGREYTNVVNSLQEGYWITYPPPIYKVWVPPQQASWVSPPASELAHKFFLAHSDNYPQGGDLIYIKKDGVYELSPNKITHALEVYYSSGGGYGVNDYPSFRYGGKPIIPLLAPVGNAVFTMLNPNRYKRTFKIRIVHVIVREAKWNLDCYDNQVGEAGSFNQNFVFTSTNIVSDPICGNIGTVGITEIPGPFTTDKKYIRLTCIRKVNFPASKNEGYAVGSRILSVQLIDL.

To D.discoideum protein M3L.

The sequence is that of cAMP-regulated M3R protein (prtB) from Dictyostelium discoideum (Social amoeba).